A 625-amino-acid polypeptide reads, in one-letter code: Vacuolar-sorting receptor 7 (625 aa).

The first 26 residues, 1–26 (MGLVNGRASLTFLLAALTIIAMVVEA), serve as a signal peptide directing secretion. Residues 27–564 (RFVVEKESIS…CIERYGSKTA (538 aa)) lie on the Lumenal side of the membrane. A PA domain is found at 58 to 166 (DYGGFLIGSV…SFGDDLRQGF (109 aa)). N-linked (GlcNAc...) asparagine glycosylation is found at N292, N400, and N432. EGF-like domains lie at 414–464 (ETNE…TSCT) and 467–513 (GPAR…LTCE). Cystine bridges form between C418/C436, C425/C445, C447/C463, C471/C491, C478/C499, C501/C512, and C542/C555. The EGF-like 3; calcium-binding domain occupies 514–556 (DINECKERSVCQCSGCRCKNSWGGYKCSCSGDRLYINDQDTCI). Residues 565-585 (WWLTFLILAIVAVAGLAGYIF) form a helical membrane-spanning segment. At 586-625 (YKYRFRSYMDSEIMTIMSQYMPLESQRAREVPSEAEPFTL) the chain is on the cytoplasmic side. Positions 605–608 (YMPL) match the Tyrosine-based internalization motif motif.

It belongs to the VSR (BP-80) family. In terms of tissue distribution, expressed at low levels in seedlings, roots, young leaves, flowers and siliques.

It is found in the golgi apparatus membrane. Its function is as follows. Vacuolar-sorting receptor (VSR) involved in clathrin-coated vesicles sorting from Golgi apparatus to vacuoles. The polypeptide is Vacuolar-sorting receptor 7 (VSR7) (Arabidopsis thaliana (Mouse-ear cress)).